Here is a 323-residue protein sequence, read N- to C-terminus: Serine/threonine-protein phosphatase PP1-gamma catalytic subunit (323 aa).

Position 2 is an N-acetylalanine (A2). Positions 64, 66, 92, and 124 each coordinate Mn(2+). The active-site Proton donor is the H125. Mn(2+)-binding residues include H173 and H248. A disordered region spans residues 302–323 (KKPNATRPVTPPRGMITKQAKK). T307 and T311 each carry phosphothreonine.

The protein belongs to the PPP phosphatase family. PP-1 subfamily. In terms of assembly, PP1 comprises a catalytic subunit, PPP1CA, PPP1CB or PPP1CC, which is folded into its native form by inhibitor 2 and glycogen synthetase kinase 3, and then complexed to one or several targeting or regulatory subunits. PPP1R12A, PPP1R12B and PPP1R12C mediate binding to myosin. PPP1R3A (in skeletal muscle), PPP1R3B (in sliver), PPP1R3C, PPP1R3D and PPP1R3F (in brain) mediate binding to glycogen. PPP1R15A and PPP1R15B mediate binding to EIF2S1. Part of a complex containing PPP1R15B, PP1 and NCK1/2. Interacts with PPP1R3B, PPP1R7 and CDCA2. Isoform 2 interacts with SPZ1. Interacts with IKFZ1; the interaction targets PPP1CC to pericentromeric heterochromatin, dephosphorylates IKAROS, stabilizes it and prevents it from degradation. Interacts with NOM1 and PPP1R8. Component of the PTW/PP1 phosphatase complex, composed of PPP1R10/PNUTS, TOX4, WDR82, and PPP1CA or PPP1CB or PPP1CC. Interacts with PPP1R8. Interacts with NEK2. Interacts with URI1; the interaction is phosphorylation-dependent and occurs in a growth factor-dependent manner. Interacts with FOXP3. Interacts with TMEM225 (via RVxF motif). Interacts with MKI67. Interacts with RRP1B; this targets PPP1CC to the nucleolus. Found in a complex with PPP1CA, PPP1CC, SHC1 and PEAK1. Interacts with DYNLT4. Interacts (via RVxF motif) with FIRRM; regulates PLK1 kinase activity. Interacts with the KNL1 complex subunit KNL1; the interaction is direct and mutually exclusive with KNL1 binding to microtubules. Component of the SHOC2-MRAS-PP1c (SMP) complex consisting of SHOC2, GTP-bound M-Ras/MRAS and the catalytic subunit of protein phosphatase 1 (either PPP1CA, PPP1CB or PPP1CC). SHOC2 and PP1c preferably bind M-Ras/MRAS, but they also bind K-Ras/KRAS, N-Ras/NRAS and H-Ras/HRAS; these interactions are GTP-dependent and both SHOC2 and PP1c are required to form a stable complex. Interacts with SHOC2 in the absence of Ras GTPases. Requires Mn(2+) as cofactor. Post-translationally, phosphorylated by NEK2. In terms of tissue distribution, isoform 2 is expressed only in testis, in the late spermatocytes and early spematids (at protein level).

Its subcellular location is the cytoplasm. The protein resides in the nucleus. It is found in the cleavage furrow. The protein localises to the nucleolus. It localises to the nucleoplasm. Its subcellular location is the chromosome. The protein resides in the centromere. It is found in the kinetochore. The protein localises to the nucleus speckle. It localises to the midbody. Its subcellular location is the mitochondrion. The protein resides in the cytoskeleton. It is found in the microtubule organizing center. It catalyses the reaction O-phospho-L-seryl-[protein] + H2O = L-seryl-[protein] + phosphate. The enzyme catalyses O-phospho-L-threonyl-[protein] + H2O = L-threonyl-[protein] + phosphate. With respect to regulation, inactivated by binding to URI1. Its function is as follows. Protein phosphatase that associates with over 200 regulatory proteins to form highly specific holoenzymes which dephosphorylate hundreds of biological targets. Protein phosphatase 1 (PP1) is essential for cell division, and participates in the regulation of glycogen metabolism, muscle contractility and protein synthesis. Dephosphorylates RPS6KB1. Involved in regulation of ionic conductances and long-term synaptic plasticity. May play an important role in dephosphorylating substrates such as the postsynaptic density-associated Ca(2+)/calmodulin dependent protein kinase II. Component of the PTW/PP1 phosphatase complex, which plays a role in the control of chromatin structure and cell cycle progression during the transition from mitosis into interphase. In balance with CSNK1D and CSNK1E, determines the circadian period length, through the regulation of the speed and rhythmicity of PER1 and PER2 phosphorylation. May dephosphorylate CSNK1D and CSNK1E. Regulates the recruitment of the SKA complex to kinetochores. Core component of the SHOC2-MRAS-PP1c (SMP) holophosphatase complex that regulates the MAPK pathway activation. Dephosphorylates MKI67 at the onset of anaphase. The SMP complex specifically dephosphorylates the inhibitory phosphorylation at 'Ser-259' of RAF1 kinase, 'Ser-365' of BRAF kinase and 'Ser-214' of ARAF kinase, stimulating their kinase activities. The SMP complex enhances the dephosphorylation activity and substrate specificity of PP1c. In terms of biological role, required for normal male fertility. The sequence is that of Serine/threonine-protein phosphatase PP1-gamma catalytic subunit (Ppp1cc) from Rattus norvegicus (Rat).